Here is a 263-residue protein sequence, read N- to C-terminus: Glutamate/glutamine/aspartate/asparagine transport ATP-binding protein BztD (263 aa).

In terms of domain architecture, ABC transporter spans 23–257 (IQISQMNKWY…PQSERTKQFL (235 aa)). 55–62 (GPSGSGKS) is a binding site for ATP.

It belongs to the ABC transporter superfamily. BztB and BztC form a heterodimer which can form a membrane complex with a homodimer of BztD.

The protein localises to the cell membrane. In terms of biological role, part of a binding-protein-dependent transport system for glutamate, glutamine, aspartate, asparagine. Probably responsible for energy coupling to the transport system. In Rhodobacter capsulatus (strain ATCC BAA-309 / NBRC 16581 / SB1003), this protein is Glutamate/glutamine/aspartate/asparagine transport ATP-binding protein BztD (bztD).